Consider the following 397-residue polypeptide: Phosphoglycerate kinase (397 aa).

Residues 25–27 (DLN), Arg41, 64–67 (HLGR), Arg118, and Arg151 each bind substrate. ATP is bound by residues Lys202, Glu324, and 350-353 (GGDT).

It belongs to the phosphoglycerate kinase family. As to quaternary structure, monomer.

It localises to the cytoplasm. The catalysed reaction is (2R)-3-phosphoglycerate + ATP = (2R)-3-phospho-glyceroyl phosphate + ADP. It functions in the pathway carbohydrate degradation; glycolysis; pyruvate from D-glyceraldehyde 3-phosphate: step 2/5. The protein is Phosphoglycerate kinase of Leptothrix cholodnii (strain ATCC 51168 / LMG 8142 / SP-6) (Leptothrix discophora (strain SP-6)).